The primary structure comprises 403 residues: Metacaspase-1 (403 aa).

A disordered region spans residues 1-95 (MFPGSGHNTY…PSGSQSFGQN (95 aa)). Residues 13-22 (YPPPQGPPPN) show a composition bias toward pro residues. 2 stretches are compositionally biased toward low complexity: residues 23 to 34 (NNGYNSGPNNSY) and 49 to 62 (QYDQQSQYSQQSQP). Residues H193 and C249 contribute to the active site.

Belongs to the peptidase C14B family.

In terms of biological role, involved in cell death (apoptosis). The polypeptide is Metacaspase-1 (MCA1) (Scheffersomyces stipitis (strain ATCC 58785 / CBS 6054 / NBRC 10063 / NRRL Y-11545) (Yeast)).